Consider the following 90-residue polypeptide: uncharacterized protein (90 aa).

The protein localises to the mitochondrion. This is an uncharacterized protein from Ascobolus immersus.